The primary structure comprises 475 residues: DnaB-like replicative helicase (475 aa).

Residues 165–444 (YMNKARKVPF…STPTEVNEVA (280 aa)) enclose the SF4 helicase domain. 197 to 204 (AGVNVGKS) is an ATP binding site. Residues 456–475 (YQRNESTRAQLDALANELKF) are interaction with the helicase assembly factor.

It belongs to the helicase family. DnaB subfamily. Homohexamer. The homohexamer is a trimer of asymmetric dimers. Interacts with the DNA primase; this interaction forms the active primosome complex, which is composed of 6 helicase and 1 primase subunits and expresses full helicase and primase activities. Interacts (via C-terminus) with the helicase assembly factor; this interaction brings about the rapid assembly of the helicase onto ssDNA. Part of the replicase complex that includes the DNA polymerase, the polymerase clamp, the clamp loader complex, the single-stranded DNA binding protein, the primase, the DnaB-like replicative helicase and the helicase assembly factor.

Its function is as follows. ATP-dependent DNA helicase essential for viral DNA replication and recombination. The helicase moves 5' -&gt; 3' on the lagging strand template, unwinding the DNA duplex ahead of the leading strand polymerase at the replication fork and generating ssDNA for both leading and lagging strand synthesis. Interaction with the primase allows the primase to initiate lagging strand synthesis and fully activates the helicase. Loaded by the helicase assembly factor on replication forks that begin at discrete replication origin sequences, as well as on forks that are created during recombination. This is DnaB-like replicative helicase from Escherichia coli (Bacteriophage T4).